The primary structure comprises 208 residues: Putative dioxygenase RC0543 (208 aa).

The protein belongs to the intradiol ring-cleavage dioxygenase family.

This chain is Putative dioxygenase RC0543, found in Rickettsia conorii (strain ATCC VR-613 / Malish 7).